We begin with the raw amino-acid sequence, 136 residues long: Histone H3 (136 aa).

The disordered stretch occupies residues 1–43 (MARTKQTARKSTGAKAPRKQLASKAARKSAPATGGIKKPHRFR). Residues Lys5 and Lys10 each carry the N6,N6,N6-trimethyllysine; alternate modification. Position 5 is an N6,N6-dimethyllysine; alternate (Lys5). 2 positions are modified to N6-acetyllysine; alternate: Lys5 and Lys10. N6-methyllysine; alternate is present on Lys5. Ser11 is modified (phosphoserine). N6-acetyllysine occurs at positions 15, 19, and 24. Lys28 and Lys37 each carry N6,N6,N6-trimethyllysine; alternate. N6,N6-dimethyllysine; alternate is present on residues Lys28 and Lys37. N6-acetyllysine; alternate occurs at positions 28, 37, and 57. N6-methyllysine; alternate is present on residues Lys28, Lys37, and Lys57. Residue Lys80 is modified to N6-methyllysine.

It belongs to the histone H3 family. As to quaternary structure, the nucleosome is a histone octamer containing two molecules each of H2A, H2B, H3 and H4 assembled in one H3-H4 heterotetramer and two H2A-H2B heterodimers. The octamer wraps approximately 147 bp of DNA. Post-translationally, phosphorylated to form H3S10ph. H3S10ph promotes subsequent H3K14ac formation by GCN5. H3S10ph is only found in the mitotically dividing MIC, but not in the amitotically dividing MAC. H3S10ph is correlated with chromosome condensation during mitotic or meiotic micronuclear divisions. In terms of processing, acetylation of histone H3 leads to transcriptional activation. H3K14ac formation by GCN5 is promoted by H3S10ph. H3K9acK14ac is the preferred acetylated form of newly synthesized H3. Acetylation occurs almost exclusively in the MAC. Methylated to form H3K4me. H3K4me is only found in the transcriptionally active MAC. Methylated to form H3K9me in developing MACs during conjugation, when genome-wide DNA elimination occurs. At this stage, H3K9me specifically occurs on DNA sequences being eliminated (IES), probably targeted by small scan RNAs (scnRNAs) bound to IES, and is required for efficient IES elimination. H3K9me is required for the interaction with the chromodomains of PDD1 and PDD3. Post-translationally, the full-length protein H3S (slow migrating) is converted to H3F (fast migrating) by proteolytic removal of the first 6 residues. H3F is unique to MIC, and processing seems to occur regularly each generation at a specific point in the cell cycle.

It is found in the nucleus. Its subcellular location is the chromosome. Its function is as follows. Core component of nucleosome. Nucleosomes wrap and compact DNA into chromatin, limiting DNA accessibility to the cellular machineries which require DNA as a template. Histones thereby play a central role in transcription regulation, DNA repair, DNA replication and chromosomal stability. DNA accessibility is regulated via a complex set of post-translational modifications of histones, also called histone code, and nucleosome remodeling. This Tetrahymena pyriformis protein is Histone H3.